The following is a 339-amino-acid chain: Dihydroorotate dehydrogenase (quinone) (339 aa).

FMN is bound by residues 62–66 and threonine 86; that span reads AGMDK. A substrate-binding site is contributed by lysine 66. 111-115 is a substrate binding site; sequence NRMGF. Positions 139 and 172 each coordinate FMN. Substrate is bound at residue asparagine 172. Residue serine 175 is the Nucleophile of the active site. Asparagine 177 contacts substrate. FMN-binding residues include lysine 217 and threonine 245. Position 246-247 (246-247) interacts with substrate; it reads NT. FMN contacts are provided by residues glycine 268, glycine 297, and 318-319; that span reads YS.

It belongs to the dihydroorotate dehydrogenase family. Type 2 subfamily. As to quaternary structure, monomer. The cofactor is FMN.

It is found in the cell membrane. It catalyses the reaction (S)-dihydroorotate + a quinone = orotate + a quinol. Its pathway is pyrimidine metabolism; UMP biosynthesis via de novo pathway; orotate from (S)-dihydroorotate (quinone route): step 1/1. Functionally, catalyzes the conversion of dihydroorotate to orotate with quinone as electron acceptor. The sequence is that of Dihydroorotate dehydrogenase (quinone) from Shewanella baltica (strain OS223).